Reading from the N-terminus, the 70-residue chain is DNA-directed RNA polymerase subunit omega (70 aa).

This sequence belongs to the RNA polymerase subunit omega family. The RNAP catalytic core consists of 2 alpha, 1 beta, 1 beta' and 1 omega subunit. When a sigma factor is associated with the core the holoenzyme is formed, which can initiate transcription.

The catalysed reaction is RNA(n) + a ribonucleoside 5'-triphosphate = RNA(n+1) + diphosphate. Its function is as follows. Promotes RNA polymerase assembly. Latches the N- and C-terminal regions of the beta' subunit thereby facilitating its interaction with the beta and alpha subunits. This is DNA-directed RNA polymerase subunit omega from Shouchella clausii (strain KSM-K16) (Alkalihalobacillus clausii).